The primary structure comprises 959 residues: Probable serine/threonine-protein kinase DDB_G0291664 (959 aa).

Positions Q154–T213 are disordered. Positions T162–P176 are enriched in pro residues. 2 ANK repeats span residues K294–I324 and L333–M362. Residues I482–L762 form the Protein kinase domain. ATP is bound by residues I488–V496 and K509. D610 (proton acceptor) is an active-site residue. A disordered region spans residues N904–Q959.

It belongs to the protein kinase superfamily. Ser/Thr protein kinase family.

It catalyses the reaction L-seryl-[protein] + ATP = O-phospho-L-seryl-[protein] + ADP + H(+). The enzyme catalyses L-threonyl-[protein] + ATP = O-phospho-L-threonyl-[protein] + ADP + H(+). This Dictyostelium discoideum (Social amoeba) protein is Probable serine/threonine-protein kinase DDB_G0291664.